Reading from the N-terminus, the 63-residue chain is Putative alpha-neurotoxin RjAa9 (63 aa).

Residues Lys-1–Arg-60 form the LCN-type CS-alpha/beta domain. 4 disulfides stabilise this stretch: Cys-11–Cys-59, Cys-15–Cys-35, Cys-21–Cys-42, and Cys-25–Cys-44.

This sequence belongs to the long (4 C-C) scorpion toxin superfamily. Sodium channel inhibitor family. Alpha subfamily. As to expression, expressed by the venom gland.

It localises to the secreted. Alpha toxins bind voltage-independently at site-3 of sodium channels (Nav) and inhibits the inactivation of the activated channels, thereby blocking neuronal transmission. This Rhopalurus junceus (Caribbean blue scorpion) protein is Putative alpha-neurotoxin RjAa9.